A 264-amino-acid chain; its full sequence is E3 ubiquitin-protein ligase MARCHF8 (264 aa).

Positions 15 to 47 are disordered; that stretch reads LGHSVSRSSNISKAGSPTSVSAPSSFPRTSVTP. A compositionally biased stretch (polar residues) spans 17–47; the sequence is HSVSRSSNISKAGSPTSVSAPSSFPRTSVTP. The RING-CH-type zinc-finger motif lies at 45–106; the sequence is VTPSSQDICR…ELCKFEFIME (62 aa). Zn(2+) contacts are provided by Cys53, Cys56, Cys70, Cys72, His80, Cys83, Cys96, and Cys99. 2 consecutive transmembrane segments (helical) span residues 130–150 and 170–190; these read CSVT…YVLI and FWTK…FMYV.

The protein resides in the cytoplasmic vesicle membrane. The protein localises to the lysosome membrane. Its subcellular location is the early endosome membrane. It catalyses the reaction S-ubiquitinyl-[E2 ubiquitin-conjugating enzyme]-L-cysteine + [acceptor protein]-L-lysine = [E2 ubiquitin-conjugating enzyme]-L-cysteine + N(6)-ubiquitinyl-[acceptor protein]-L-lysine.. Its pathway is protein modification; protein ubiquitination. Functionally, E3 ubiquitin-protein ligase that mediates ubiquitination of cd86 and MHC class II proteins, such as hla-dr alpha and beta, and promotes their subsequent endocytosis and sorting to lysosomes via multivesicular bodies. The sequence is that of E3 ubiquitin-protein ligase MARCHF8 (marchf8) from Xenopus tropicalis (Western clawed frog).